A 174-amino-acid chain; its full sequence is MTCCQTSFCGYPSFSISGTCGSSCCQPSCCETSCCQPRSCQTSFCGFPSFSTSGTCSSSCCQPSCCETSCCQPSCCETSCCQPSCCQISSCGTGCGIGGGISYGQEGSSGAVSTRIRWCRPDSRVEGTYLPPCCVVSCTPPSCCQLHHAQASCCRPSYCGQSCCRPVCCCEPTC.

A 15 X 5 AA repeats of C-C-[QEPVRC]-[TPIVLE]-[SRHVP] region spans residues Cys-3–Pro-172.

The protein belongs to the KRTAP type 1 family. Interacts with hair keratins. Expressed in the middle/upper portions of the hair cortex, in the region termed the keratogenous zone.

Its function is as follows. In the hair cortex, hair keratin intermediate filaments are embedded in an interfilamentous matrix, consisting of hair keratin-associated proteins (KRTAP), which are essential for the formation of a rigid and resistant hair shaft through their extensive disulfide bond cross-linking with abundant cysteine residues of hair keratins. The matrix proteins include the high-sulfur and high-glycine-tyrosine keratins. This Homo sapiens (Human) protein is Keratin-associated protein 1-5 (KRTAP1-5).